Consider the following 311-residue polypeptide: Malate dehydrogenase (311 aa).

Residues 7–13 (GAAGGIG) and Asp34 contribute to the NAD(+) site. Residues Arg81 and Arg87 each contribute to the substrate site. NAD(+)-binding positions include Asn94 and 117 to 119 (ITN). Residues Asn119 and Arg153 each coordinate substrate. The active-site Proton acceptor is His177. Residue Met227 participates in NAD(+) binding.

The protein belongs to the LDH/MDH superfamily. MDH type 1 family. Homodimer.

It carries out the reaction (S)-malate + NAD(+) = oxaloacetate + NADH + H(+). Catalyzes the reversible oxidation of malate to oxaloacetate. In Haemophilus influenzae (strain PittEE), this protein is Malate dehydrogenase.